The sequence spans 421 residues: Testin (421 aa).

The PET domain occupies 92–199 (MILTNPVAAK…GDVKLPCEMD (108 aa)). Residues 133–164 (EKQPVAGSEGAQYRKKQLAKQLPAHDQDPSKC) form a disordered region. Positions 155 to 164 (PAHDQDPSKC) are enriched in basic and acidic residues. LIM zinc-binding domains lie at 234 to 297 (YSCY…CDSE), 299 to 359 (PRCA…NHAV), and 362 to 421 (QGCH…KMMS).

This sequence belongs to the prickle / espinas / testin family. As to quaternary structure, interacts via LIM domain 1 with ZYX. Interacts (via LIM domain 3) with ENAH and VASP. Interacts with ALKBH4, talin, actin, alpha-actinin, GRIP1 and PXN. Interacts (via LIM domain 2) with ACTL7A (via N-terminus). Heterodimer with ACTL7A; the heterodimer interacts with ENAH to form a heterotrimer.

Its subcellular location is the cytoplasm. It is found in the cell junction. It localises to the focal adhesion. Scaffold protein that may play a role in cell adhesion, cell spreading and in the reorganization of the actin cytoskeleton. Plays a role in the regulation of cell proliferation. May act as a tumor suppressor. The chain is Testin (TES) from Aotus nancymaae (Ma's night monkey).